The following is a 34-amino-acid chain: Photosystem II reaction center protein M (34 aa).

Residues 5-25 (ILALIAIALFISVPTAFLIII) form a helical membrane-spanning segment.

It belongs to the PsbM family. PSII is composed of 1 copy each of membrane proteins PsbA, PsbB, PsbC, PsbD, PsbE, PsbF, PsbH, PsbI, PsbJ, PsbK, PsbL, PsbM, PsbT, PsbX, PsbY, PsbZ, Psb30/Ycf12, at least 3 peripheral proteins of the oxygen-evolving complex and a large number of cofactors. It forms dimeric complexes.

The protein resides in the plastid. It is found in the chloroplast thylakoid membrane. In terms of biological role, one of the components of the core complex of photosystem II (PSII). PSII is a light-driven water:plastoquinone oxidoreductase that uses light energy to abstract electrons from H(2)O, generating O(2) and a proton gradient subsequently used for ATP formation. It consists of a core antenna complex that captures photons, and an electron transfer chain that converts photonic excitation into a charge separation. This subunit is found at the monomer-monomer interface. The chain is Photosystem II reaction center protein M from Gnetum parvifolium (Small-leaved jointfir).